A 164-amino-acid chain; its full sequence is Cyclic pyranopterin monophosphate synthase (164 aa).

Residues 77 to 79 (LCH) and 115 to 116 (ME) each bind substrate. The active site involves Asp130.

This sequence belongs to the MoaC family. As to quaternary structure, homohexamer; trimer of dimers.

The catalysed reaction is (8S)-3',8-cyclo-7,8-dihydroguanosine 5'-triphosphate = cyclic pyranopterin phosphate + diphosphate. It participates in cofactor biosynthesis; molybdopterin biosynthesis. Catalyzes the conversion of (8S)-3',8-cyclo-7,8-dihydroguanosine 5'-triphosphate to cyclic pyranopterin monophosphate (cPMP). The protein is Cyclic pyranopterin monophosphate synthase of Sinorhizobium medicae (strain WSM419) (Ensifer medicae).